Here is a 114-residue protein sequence, read N- to C-terminus: MTYLVYIVFTIVLTVGLILVSYLLSQAQPDSEKVSAYECGFSPLGDARQKFDVSFYLIAILFIIFDLEVVFILPFASVIHNVSLLGGWITIIFLVILTIGFIYEFVSGAITDSF.

The next 3 helical transmembrane spans lie at 4-24 (LVYI…SYLL), 55-75 (FYLI…ILPF), and 82-102 (VSLL…IGFI).

Belongs to the complex I subunit 3 family.

Its subcellular location is the mitochondrion membrane. The catalysed reaction is a ubiquinone + NADH + 5 H(+)(in) = a ubiquinol + NAD(+) + 4 H(+)(out). Its function is as follows. Core subunit of the mitochondrial membrane respiratory chain NADH dehydrogenase (Complex I) that is believed to belong to the minimal assembly required for catalysis. Complex I functions in the transfer of electrons from NADH to the respiratory chain. The immediate electron acceptor for the enzyme is believed to be ubiquinone. This is NADH-ubiquinone oxidoreductase chain 3 (ND3) from Allomyces macrogynus.